The primary structure comprises 572 residues: Proline--tRNA ligase (572 aa).

Belongs to the class-II aminoacyl-tRNA synthetase family. ProS type 1 subfamily. In terms of assembly, homodimer.

Its subcellular location is the cytoplasm. It catalyses the reaction tRNA(Pro) + L-proline + ATP = L-prolyl-tRNA(Pro) + AMP + diphosphate. In terms of biological role, catalyzes the attachment of proline to tRNA(Pro) in a two-step reaction: proline is first activated by ATP to form Pro-AMP and then transferred to the acceptor end of tRNA(Pro). As ProRS can inadvertently accommodate and process non-cognate amino acids such as alanine and cysteine, to avoid such errors it has two additional distinct editing activities against alanine. One activity is designated as 'pretransfer' editing and involves the tRNA(Pro)-independent hydrolysis of activated Ala-AMP. The other activity is designated 'posttransfer' editing and involves deacylation of mischarged Ala-tRNA(Pro). The misacylated Cys-tRNA(Pro) is not edited by ProRS. This is Proline--tRNA ligase from Yersinia pestis (strain Pestoides F).